We begin with the raw amino-acid sequence, 107 residues long: Circadian clock oscillator protein KaiB (107 aa).

This sequence belongs to the KaiB family. As to quaternary structure, may undergo a major conformational rearrangment; in the free state forms homooligomers. When bound to KaiC switches to a monomeric thioredoxin-fold (KaiB(fs)). The active oscillator complex is probably KaiC(6):KaiB(6).

Component of the KaiBC clock protein complex, which constitutes the main circadian regulator in cyanobacteria; it may modify the ATPase activity of KaiC. In terms of biological role, may be a metamorphic protein which reversibly switches between an inactive tetrameric fold and a rare, thioredoxin-like monomeric fold (KaiB(fs)). KaiB(fs) binds phospho-KaiC, and perhaps clock output effectors. The sequence is that of Circadian clock oscillator protein KaiB from Prochlorococcus marinus (strain NATL2A).